Consider the following 327-residue polypeptide: Transaldolase (327 aa).

The Schiff-base intermediate with substrate role is filled by Lys-132.

It belongs to the transaldolase family. Type 1 subfamily. In terms of assembly, homodimer.

The protein localises to the cytoplasm. It catalyses the reaction D-sedoheptulose 7-phosphate + D-glyceraldehyde 3-phosphate = D-erythrose 4-phosphate + beta-D-fructose 6-phosphate. Its pathway is carbohydrate degradation; pentose phosphate pathway; D-glyceraldehyde 3-phosphate and beta-D-fructose 6-phosphate from D-ribose 5-phosphate and D-xylulose 5-phosphate (non-oxidative stage): step 2/3. In terms of biological role, transaldolase is important for the balance of metabolites in the pentose-phosphate pathway. This chain is Transaldolase, found in Chlamydia felis (strain Fe/C-56) (Chlamydophila felis).